Consider the following 325-residue polypeptide: N-acetyl-gamma-glutamyl-phosphate reductase (325 aa).

The active site involves cysteine 135.

Belongs to the NAGSA dehydrogenase family. Type 1 subfamily.

It is found in the cytoplasm. The enzyme catalyses N-acetyl-L-glutamate 5-semialdehyde + phosphate + NADP(+) = N-acetyl-L-glutamyl 5-phosphate + NADPH + H(+). Its pathway is amino-acid biosynthesis; L-arginine biosynthesis; N(2)-acetyl-L-ornithine from L-glutamate: step 3/4. Functionally, catalyzes the NADPH-dependent reduction of N-acetyl-5-glutamyl phosphate to yield N-acetyl-L-glutamate 5-semialdehyde. In Karelsulcia muelleri (strain GWSS) (Sulcia muelleri), this protein is N-acetyl-gamma-glutamyl-phosphate reductase.